The following is a 398-amino-acid chain: cAMP-dependent protein kinase, catalytic subunit-like (398 aa).

A Protein kinase domain is found at 90 to 344 (LERIITIGKG…TQDVKDHKWF (255 aa)). ATP contacts are provided by residues 96–104 (IGKGTFGRV) and Lys-119. The active-site Proton acceptor is Asp-213. An AGC-kinase C-terminal domain is found at 345 to 398 (EKVNWDDTLHLRVEPPIVPTLYHPGDTGNFDDYEEDTTGGPLCSQRDRDLFAEW).

The protein belongs to the protein kinase superfamily. Ser/Thr protein kinase family. cAMP subfamily.

The catalysed reaction is L-seryl-[protein] + ATP = O-phospho-L-seryl-[protein] + ADP + H(+). It catalyses the reaction L-threonyl-[protein] + ATP = O-phospho-L-threonyl-[protein] + ADP + H(+). The protein is cAMP-dependent protein kinase, catalytic subunit-like of Caenorhabditis elegans.